Consider the following 300-residue polypeptide: PAK4-inhibitor INKA2 (300 aa).

3 disordered regions span residues 59–104 (GGTP…SSPK), 178–201 (LEKG…GQSR), and 230–288 (KEKP…LEPS). Residues 60–73 (GTPTFSCPESSQEQ) show a composition bias toward polar residues. Over residues 93-102 (SSSQPSFDSS) the composition is skewed to low complexity. Positions 140–183 (EPDDWTSTLMSRGRNRQPLVLGDNVFADLVGNWLDLPELEKGGE) are inka box. Residues 246 to 256 (GRSKKVKKRSL) are compositionally biased toward basic residues.

Belongs to the INKA family. As to quaternary structure, interacts with PAK4. Enriched in the nervous system.

Its subcellular location is the nucleus. Inhibitor of the serine/threonine-protein kinase PAK4. Acts by binding PAK4 in a substrate-like manner, inhibiting the protein kinase activity. The chain is PAK4-inhibitor INKA2 from Mus musculus (Mouse).